Consider the following 222-residue polypeptide: UPF0502 protein XCV4380 (222 aa).

It belongs to the UPF0502 family.

In Xanthomonas euvesicatoria pv. vesicatoria (strain 85-10) (Xanthomonas campestris pv. vesicatoria), this protein is UPF0502 protein XCV4380.